We begin with the raw amino-acid sequence, 75 residues long: Exodeoxyribonuclease 7 small subunit (75 aa).

It belongs to the XseB family. As to quaternary structure, heterooligomer composed of large and small subunits.

The protein localises to the cytoplasm. The enzyme catalyses Exonucleolytic cleavage in either 5'- to 3'- or 3'- to 5'-direction to yield nucleoside 5'-phosphates.. Functionally, bidirectionally degrades single-stranded DNA into large acid-insoluble oligonucleotides, which are then degraded further into small acid-soluble oligonucleotides. This chain is Exodeoxyribonuclease 7 small subunit, found in Citrifermentans bemidjiense (strain ATCC BAA-1014 / DSM 16622 / JCM 12645 / Bem) (Geobacter bemidjiensis).